A 416-amino-acid chain; its full sequence is Transcription factor PIL1 (416 aa).

Disordered regions lie at residues 1–24 (MEAKPLASSSSEPNMISPSSNIKP), 89–113 (VSQSKPQQDKETNEQMNNNKKKLKS), and 197–231 (ESTYLSNNSDDESDDAKTQVHARTRKPVTKRKRST). Low complexity predominate over residues 8–22 (SSSSEPNMISPSSNI). A coiled-coil region spans residues 95-124 (QQDKETNEQMNNNKKKLKSSKIEFERNVSK). The segment covering 216–229 (VHARTRKPVTKRKR) has biased composition (basic residues). A bHLH domain is found at 229–278 (RSTEVHKLYERKRRDEFNKKMRALQDLLPNCYKDDKASLLDEAIKYMRTL).

Homodimer. Interacts with APRR1/TOC1. Associates to PTAC12/HMR/PAP5 which acts as a transcriptional coactivator. As to expression, mainly expressed in stems, fruits and flowers and, to a lower extent, in leaves, seedlings and roots. Accumulates in etiolated seedlings.

The protein localises to the nucleus. Its function is as follows. Transcription factor. Involved in responses to transient and long-term shade. Required for the light-mediated inhibition of hypocotyl elongation. Necessary for rapid light-induced expression of the photomorphogenesis- and circadian-related gene APRR9. Seems to play a role in multiple PHYB responses, such as flowering transition and petiole elongation. The sequence is that of Transcription factor PIL1 from Arabidopsis thaliana (Mouse-ear cress).